The chain runs to 337 residues: DNA-directed RNA polymerase subunit alpha (337 aa).

Residues 1 to 233 are alpha N-terminal domain (alpha-NTD); that stretch reads MVREEVVGST…DLFIPFLHAE (233 aa). The tract at residues 265–337 is alpha C-terminal domain (alpha-CTD); that stretch reads KEIALKCIFI…FAIDLPKNKF (73 aa).

It belongs to the RNA polymerase alpha chain family. In terms of assembly, in plastids the minimal PEP RNA polymerase catalytic core is composed of four subunits: alpha, beta, beta', and beta''. When a (nuclear-encoded) sigma factor is associated with the core the holoenzyme is formed, which can initiate transcription.

The protein localises to the plastid. The protein resides in the chloroplast. It carries out the reaction RNA(n) + a ribonucleoside 5'-triphosphate = RNA(n+1) + diphosphate. Functionally, DNA-dependent RNA polymerase catalyzes the transcription of DNA into RNA using the four ribonucleoside triphosphates as substrates. This Acorus gramineus (Dwarf sweet flag) protein is DNA-directed RNA polymerase subunit alpha.